A 457-amino-acid chain; its full sequence is Cysteine desulfurase (457 aa).

A127, T128, Q235, S255, and H257 together coordinate pyridoxal 5'-phosphate. Residue K258 is modified to N6-(pyridoxal phosphate)lysine. Residue T295 participates in pyridoxal 5'-phosphate binding. C381 (cysteine persulfide intermediate) is an active-site residue. C381 lines the [2Fe-2S] cluster pocket. Residue C381 participates in Zn(2+) binding. Position 381 is a cysteine persulfide (C381).

The protein belongs to the class-V pyridoxal-phosphate-dependent aminotransferase family. NifS/IscS subfamily. In terms of assembly, homodimer. Component of the mitochondrial core iron-sulfur cluster (ISC) complex composed of NFS1, LYRM4, NDUFAB1, ISCU, FXN, and FDX2; this complex is a heterohexamer containing two copies of each monomer. Component of cyteine desulfurase complex composed of NFS1, LYRM4 and NDUFAB1; this complex contributes to the activation of cysteine desulfurase activity and NFS1 stabilization. Interacts (homodimer form) with ISCU (D-state); each monomer interacts with the C-terminal regions of each NFS1 monomer. Interacts with HSPA9. Interacts (via homodimer form) with FDX2. Interacts (via homodimer form) with FXN. Interacts with LYRM4. Component of a complex composed of FXN, NFS1, LYRM4 and ISCU. Monomer. Homodimer. Oligomer. Interacts with ISCU. Component of the cysteine desulfurase complex composed of NFS1 and LYRM4; this complex contributes to the activation of cysteine desulfurase activity. Interacts with MOCS3. It depends on pyridoxal 5'-phosphate as a cofactor. Post-translationally, N-gluconoylated. Cysteine persulfide intermediate is reduced by thiol-containing molecules like glutathione and L-cysteine. Persulfide reduction is a rate-limiting step of cysteine desulfurase catalytic cycle. In terms of tissue distribution, predominantly expressed in heart and skeletal muscle. Also found in brain, liver and pancreas.

The protein resides in the mitochondrion. Its subcellular location is the cytoplasm. It is found in the nucleus. The protein localises to the cytoskeleton. It localises to the microtubule organizing center. The protein resides in the centrosome. It carries out the reaction (sulfur carrier)-H + L-cysteine = (sulfur carrier)-SH + L-alanine. It catalyses the reaction L-cysteinyl-[cysteine desulfurase] + L-cysteine = S-sulfanyl-L-cysteinyl-[cysteine desulfurase] + L-alanine. Active only in complex with LYRM4. Functionally, cysteine desulfurase, of the core iron-sulfur cluster (ISC) assembly complex, that catalyzes the desulfuration of L-cysteine to L-alanine, as component of the cysteine desulfurase complex, leading to the formation of a cysteine persulfide intermediate at the active site cysteine residue and participates in the [2Fe-2S] clusters assembly on the scaffolding protein ISCU. The persulfide is then transferred on the flexible Cys loop from the catalytic site of NFS1 to the surface of NFS1. After the NFS1-linked persulfide sulfur is transferred to one of the conserved Cys residues of the scaffold, a reaction assisted by FXN. The core iron-sulfur cluster (ISC) assembly complex is involved in the de novo synthesis of a [2Fe-2S] cluster, the first step of the mitochondrial iron-sulfur protein biogenesis. This process is initiated by the cysteine desulfurase complex (NFS1:LYRM4:NDUFAB1) that produces persulfide which is delivered on the scaffold protein ISCU in a FXN-dependent manner. Then this complex is stabilized by FDX2 which provides reducing equivalents to accomplish the [2Fe-2S] cluster assembly. Finally, the [2Fe-2S] cluster is transferred from ISCU to chaperone proteins, including HSCB, HSPA9 and GLRX5. In terms of biological role, may catalyze the desulfuration of L-cysteine to L-alanine as component of the cysteine desulfurase complex (NFS1:LYRM4), leading to the formation of a cysteine persulfide intermediate. Acts as a sulfur donor for MOCS3 by transferring the sulfur of the cysteine persulfide intermediate on MOCS3. This Homo sapiens (Human) protein is Cysteine desulfurase.